The chain runs to 801 residues: Na(+)/H(+) antiporter subunit A (801 aa).

21 helical membrane passes run 4–21, 28–50, 80–102, 109–128, 132–154, 166–188, 203–222, 229–251, 266–288, 301–323, 338–360, 372–394, 428–450, 471–493, 526–548, 594–616, 626–647, 654–671, 676–698, 710–732, and 772–789; these read LHLA…IPFL, VHTG…PMIR, GLLF…IFYL, LGPF…GVVL, VMVL…GYWY, SLLI…YLIT, IAGH…GAFT, FYIW…HSAT, IFAF…MVWG, ILAF…SAAA, AAIF…VGII, LGGL…FSMA, VLFP…KLLF, VGML…FPNI, GVTT…YLSL, YLLY…KGGF, IGVY…TVFA, IIAL…FVIF, LALT…FYHL, FRMT…GIAS, and MFEI…YSMI.

Belongs to the CPA3 antiporters (TC 2.A.63) subunit A family. As to quaternary structure, forms a heterooligomeric complex that consists of seven subunits: MrpA, MrpB, MrpC, MrpD, MrpE, MrpF and MrpG.

Its subcellular location is the cell membrane. Its function is as follows. Mrp complex is a Na(+)/H(+) antiporter that is considered to be the major Na(+) excretion system in B.subtilis. Has a major role in Na(+) resistance and a minor role in Na(+)- and K(+)-dependent pH homeostasis as compared to TetB. MrpA may be the actual Na(+)/H(+) antiporter, although the six other Mrp proteins are all required for Na(+)/H(+) antiport activity and Na(+) resistance. MrpA is required for initiation of sporulation when external Na(+) concentration increases. Also transports Li(+) but not K(+), Ca(2+) or Mg(2+). The protein is Na(+)/H(+) antiporter subunit A (mrpA) of Bacillus subtilis (strain 168).